The sequence spans 159 residues: Insertion element IS136 uncharacterized 16.9 kDa protein (159 aa).

Residues 126-142 (RSFVSPSSSTPSTARSS) show a composition bias toward low complexity. The tract at residues 126 to 159 (RSFVSPSSSTPSTARSSPGRPLPMQAFPAQTCAT) is disordered.

The protein is Insertion element IS136 uncharacterized 16.9 kDa protein of Agrobacterium tumefaciens (strain T37).